The chain runs to 350 residues: Phosphotriesterase-related protein (350 aa).

Residues His-22, His-24, Glu-169, His-201, His-230, and Asp-298 each contribute to the a divalent metal cation site.

Belongs to the metallo-dependent hydrolases superfamily. Phosphotriesterase family. It depends on a divalent metal cation as a cofactor.

The sequence is that of Phosphotriesterase-related protein from Drosophila mojavensis (Fruit fly).